The following is a 381-amino-acid chain: Cytochrome b (381 aa).

Helical transmembrane passes span 34–54, 78–99, 114–134, and 179–199; these read FGSLLGICLITPILTGVMLAM, WMIRNLHANGASFFFICIYLHI, WNTGIILLLTLMATAFVGYVL, and FFALHFLLPFLIAGISIVHLT. The heme b site is built by His-84 and His-98. Positions 183 and 197 each coordinate heme b. Position 202 (His-202) interacts with a ubiquinone. Transmembrane regions (helical) follow at residues 227–247, 289–309, 321–341, and 348–368; these read MKDLLGFTLLSLPFLALAFFT, LGGVLALAASVLILFTIPLLH, MSQILFWLLVANLFILTWVGS, and FIIIGQLASLSYFTILLFLFP.

It belongs to the cytochrome b family. The cytochrome bc1 complex contains 11 subunits: 3 respiratory subunits (MT-CYB, CYC1 and UQCRFS1), 2 core proteins (UQCRC1 and UQCRC2) and 6 low-molecular weight proteins (UQCRH/QCR6, UQCRB/QCR7, UQCRQ/QCR8, UQCR10/QCR9, UQCR11/QCR10 and a cleavage product of UQCRFS1). This cytochrome bc1 complex then forms a dimer. Heme b serves as cofactor.

It localises to the mitochondrion inner membrane. Its function is as follows. Component of the ubiquinol-cytochrome c reductase complex (complex III or cytochrome b-c1 complex) that is part of the mitochondrial respiratory chain. The b-c1 complex mediates electron transfer from ubiquinol to cytochrome c. Contributes to the generation of a proton gradient across the mitochondrial membrane that is then used for ATP synthesis. This Nothoprocta perdicaria (Chilean tinamou) protein is Cytochrome b (MT-CYB).